Reading from the N-terminus, the 151-residue chain is Ribosome maturation factor RimP (151 aa).

Belongs to the RimP family.

The protein localises to the cytoplasm. In terms of biological role, required for maturation of 30S ribosomal subunits. The protein is Ribosome maturation factor RimP of Caldicellulosiruptor bescii (strain ATCC BAA-1888 / DSM 6725 / KCTC 15123 / Z-1320) (Anaerocellum thermophilum).